A 773-amino-acid polypeptide reads, in one-letter code: DC-STAMP domain-containing protein 2 (773 aa).

At 1-26 the chain is on the cytoplasmic side; the sequence is MPKVMKDVVHPLGGEEPSMARAVVRS. The chain crosses the membrane as a helical span at residues 27–47; the sequence is VGGFTLGLSLATAYGLLELLV. Residues 48 to 51 lie on the Extracellular side of the membrane; the sequence is EGHS. A helical transmembrane segment spans residues 52-72; the sequence is PWGCLVGTLTLAAFLSLGMGF. Topologically, residues 73 to 233 are cytoplasmic; it reads SRQVRATVLL…IPQAYHLCYV (161 aa). A helical transmembrane segment spans residues 234-254; it reads LMPFKLALCGLASLVQVFCVI. Residues 255–322 lie on the Extracellular side of the membrane; it reads PKYIQPFLRQ…SMKLHRVREA (68 aa). N-linked (GlcNAc...) asparagine glycosylation is found at N284 and N296. The helical transmembrane segment at 323 to 343 threads the bilayer; it reads LALMGFTTPLLLVLLYLQALF. Residues 344–415 lie on the Cytoplasmic side of the membrane; sequence YRYCYLNWDH…ILETFNLIRH (72 aa). A helical transmembrane segment spans residues 416-436; sequence LLLVLFLVFLDYAVFWVLDLA. Residues 437–499 are Extracellular-facing; the sequence is RHQLQGEIVA…LRPSEPDSTG (63 aa). An N-linked (GlcNAc...) asparagine glycan is attached at N480. A helical transmembrane segment spans residues 500–520; that stretch reads YIVIGVMYGLCFFITLFGSYV. At 521 to 773 the chain is on the cytoplasmic side; it reads SRLRRVICAS…LPDPSHPPPK (253 aa). Over residues 692 to 701 the composition is skewed to low complexity; that stretch reads SLSMESTSES. The tract at residues 692 to 773 is disordered; sequence SLSMESTSES…LPDPSHPPPK (82 aa). Positions 758-773 are enriched in pro residues; it reads PLSPPSLPDPSHPPPK.

As to quaternary structure, interacts with DCST1.

Its subcellular location is the cytoplasmic vesicle. It is found in the secretory vesicle. It localises to the acrosome membrane. Essential sperm cell-surface protein required for sperm-egg fusion and fertilization. This Homo sapiens (Human) protein is DC-STAMP domain-containing protein 2 (DCST2).